The chain runs to 327 residues: HTH-type transcriptional regulator EbgR (327 aa).

One can recognise an HTH lacI-type domain in the interval methionine 1–threonine 57. Positions leucine 4 to asparagine 23 form a DNA-binding region, H-T-H motif.

Functionally, repressor for beta galactosidase alpha and beta subunits (ebgA and ebgC). Binds lactose as an inducer. The sequence is that of HTH-type transcriptional regulator EbgR (ebgR) from Escherichia coli (strain K12).